Reading from the N-terminus, the 138-residue chain is Ig heavy chain V region TEPC 1017 (138 aa).

The first 20 residues, 1-20 (MGWSYIILFLVATATDVHSQ), serve as a signal peptide directing secretion. The interval 21–49 (VQLQQPGAELVKPGASVQLSCKASGHTFT) is framework-1. Residues Cys-41 and Cys-115 are joined by a disulfide bond. The segment at 50–54 (NYWIH) is complementarity-determining-1. Residues 55-68 (WVKQRPGQGLEWIG) are framework-2. Residues 69 to 85 (EINPNDGRSNYNEKFKN) form a complementarity-determining-2 region. Residues 86 to 117 (KATLTVDKSSSTAYMQLSSLTPEEFAVYYCAR) are framework-3. The segment at 118–127 (SDGYYDWFVY) is complementarity-determining-3. Residues 128–138 (WGQGTLVTFSA) are framework-4.

The chain is Ig heavy chain V region TEPC 1017 from Mus musculus (Mouse).